A 264-amino-acid polypeptide reads, in one-letter code: Aminoglycoside 3'-phosphotransferase (264 aa).

Asp190 acts as the Proton acceptor in catalysis.

This sequence belongs to the aminoglycoside phosphotransferase family.

It catalyses the reaction kanamycin A + ATP = kanamycin 3'-phosphate + ADP + H(+). Resistance to kanamycin and structurally-related aminoglycosides, including amikacin. In Enterococcus faecalis (Streptococcus faecalis), this protein is Aminoglycoside 3'-phosphotransferase (aphA).